Consider the following 352-residue polypeptide: Probable dual-specificity RNA methyltransferase RlmN (352 aa).

Glutamate 99 functions as the Proton acceptor in the catalytic mechanism. In terms of domain architecture, Radical SAM core spans 105–339 (TKSRTTACVS…VTVRRSRGKD (235 aa)). Cysteines 112 and 344 form a disulfide. Positions 119, 123, and 126 each coordinate [4Fe-4S] cluster. Residues 170–171 (GE), serine 202, 225–227 (SLH), and asparagine 301 contribute to the S-adenosyl-L-methionine site. Cysteine 344 acts as the S-methylcysteine intermediate in catalysis.

It belongs to the radical SAM superfamily. RlmN family. It depends on [4Fe-4S] cluster as a cofactor.

It localises to the cytoplasm. It catalyses the reaction adenosine(2503) in 23S rRNA + 2 reduced [2Fe-2S]-[ferredoxin] + 2 S-adenosyl-L-methionine = 2-methyladenosine(2503) in 23S rRNA + 5'-deoxyadenosine + L-methionine + 2 oxidized [2Fe-2S]-[ferredoxin] + S-adenosyl-L-homocysteine. It carries out the reaction adenosine(37) in tRNA + 2 reduced [2Fe-2S]-[ferredoxin] + 2 S-adenosyl-L-methionine = 2-methyladenosine(37) in tRNA + 5'-deoxyadenosine + L-methionine + 2 oxidized [2Fe-2S]-[ferredoxin] + S-adenosyl-L-homocysteine. Functionally, specifically methylates position 2 of adenine 2503 in 23S rRNA and position 2 of adenine 37 in tRNAs. This is Probable dual-specificity RNA methyltransferase RlmN from Christiangramia forsetii (strain DSM 17595 / CGMCC 1.15422 / KT0803) (Gramella forsetii).